Here is a 177-residue protein sequence, read N- to C-terminus: Endothelin-2 (177 aa).

An N-terminal signal peptide occupies residues methionine 1–alanine 23. Positions alanine 24–threonine 45 are excised as a propeptide. 2 disulfide bridges follow: cysteine 48–cysteine 62 and cysteine 50–cysteine 58. Residues valine 69–arginine 177 constitute a propeptide that is removed on maturation. The tract at residues cysteine 95–histidine 110 is endothelin-like. The disordered stretch occupies residues histidine 155–arginine 177.

This sequence belongs to the endothelin/sarafotoxin family. In terms of tissue distribution, expressed in various organs including heart, lung, liver, kidney, gastrointestinal tract, uterus and ovary, but not in spleen. Within the gastrointestinal tract, gene expression was detected in rumen, a ruminant-specific digestive organ, as well as stomach, duodenum and colon.

Its subcellular location is the secreted. Functionally, endothelins are endothelium-derived vasoconstrictor peptides. The protein is Endothelin-2 (EDN2) of Bos taurus (Bovine).